A 308-amino-acid polypeptide reads, in one-letter code: 4-hydroxy-3-methylbut-2-enyl diphosphate reductase (308 aa).

Position 13 (Cys-13) interacts with [4Fe-4S] cluster. 2 residues coordinate (2E)-4-hydroxy-3-methylbut-2-enyl diphosphate: His-42 and His-75. Dimethylallyl diphosphate-binding residues include His-42 and His-75. His-42 and His-75 together coordinate isopentenyl diphosphate. Cys-97 contacts [4Fe-4S] cluster. Position 125 (His-125) interacts with (2E)-4-hydroxy-3-methylbut-2-enyl diphosphate. Residue His-125 participates in dimethylallyl diphosphate binding. His-125 provides a ligand contact to isopentenyl diphosphate. Glu-127 acts as the Proton donor in catalysis. A (2E)-4-hydroxy-3-methylbut-2-enyl diphosphate-binding site is contributed by Thr-165. Cys-195 serves as a coordination point for [4Fe-4S] cluster. The (2E)-4-hydroxy-3-methylbut-2-enyl diphosphate site is built by Ser-223, Ser-224, Asn-225, and Ser-267. The dimethylallyl diphosphate site is built by Ser-223, Ser-224, Asn-225, and Ser-267. Isopentenyl diphosphate-binding residues include Ser-223, Ser-224, Asn-225, and Ser-267.

It belongs to the IspH family. It depends on [4Fe-4S] cluster as a cofactor.

The enzyme catalyses isopentenyl diphosphate + 2 oxidized [2Fe-2S]-[ferredoxin] + H2O = (2E)-4-hydroxy-3-methylbut-2-enyl diphosphate + 2 reduced [2Fe-2S]-[ferredoxin] + 2 H(+). It catalyses the reaction dimethylallyl diphosphate + 2 oxidized [2Fe-2S]-[ferredoxin] + H2O = (2E)-4-hydroxy-3-methylbut-2-enyl diphosphate + 2 reduced [2Fe-2S]-[ferredoxin] + 2 H(+). It functions in the pathway isoprenoid biosynthesis; dimethylallyl diphosphate biosynthesis; dimethylallyl diphosphate from (2E)-4-hydroxy-3-methylbutenyl diphosphate: step 1/1. It participates in isoprenoid biosynthesis; isopentenyl diphosphate biosynthesis via DXP pathway; isopentenyl diphosphate from 1-deoxy-D-xylulose 5-phosphate: step 6/6. Catalyzes the conversion of 1-hydroxy-2-methyl-2-(E)-butenyl 4-diphosphate (HMBPP) into a mixture of isopentenyl diphosphate (IPP) and dimethylallyl diphosphate (DMAPP). Acts in the terminal step of the DOXP/MEP pathway for isoprenoid precursor biosynthesis. This chain is 4-hydroxy-3-methylbut-2-enyl diphosphate reductase, found in Chlamydia muridarum (strain MoPn / Nigg).